Reading from the N-terminus, the 180-residue chain is ADP ribosylation factor 4 (180 aa).

Residue Gly2 is the site of N-myristoyl glycine attachment. Residues 24-31, 67-71, and 126-129 each bind GTP; these read GLDAAGKT, DVGGQ, and NKQD.

Belongs to the small GTPase superfamily. Arf family. In terms of tissue distribution, uniformly distributed throughout adults.

The protein resides in the golgi apparatus. In terms of biological role, GTP-binding protein involved in protein trafficking; may modulate vesicle budding and uncoating within the Golgi apparatus. The protein is ADP ribosylation factor 4 of Drosophila melanogaster (Fruit fly).